Consider the following 29-residue polypeptide: Omega-conotoxins GVIIA/GVIIB (29 aa).

3 disulfide bridges follow: Cys1-Cys16, Cys8-Cys19, and Cys15-Cys26. 4-hydroxyproline occurs at positions 4 and 7.

In terms of tissue distribution, expressed by the venom duct.

It localises to the secreted. Its function is as follows. Omega-conotoxins act at presynaptic membranes, they bind and block voltage-gated calcium channels (Cav). The polypeptide is Omega-conotoxins GVIIA/GVIIB (Conus geographus (Geography cone)).